The primary structure comprises 229 residues: Cytochrome b6-f complex iron-sulfur subunit, chloroplastic (229 aa).

The N-terminal 50 residues, 1-50 (MASSSLSPATQLGSSRSALMAMSSGLFVKPTKMNHQMVRKEKIGLRISCQ), are a transit peptide targeting the chloroplast. A helical membrane pass occupies residues 68 to 90 (LNLLLLGALSLPTGYMLVPYATF). The Rieske domain occupies 115–211 (AAEWLKTHGP…ADIDEAGKVL (97 aa)). 4 residues coordinate [2Fe-2S] cluster: Cys-157, His-159, Cys-175, and His-178. The cysteines at positions 162 and 177 are disulfide-linked. A Phosphoserine modification is found at Ser-196.

This sequence belongs to the Rieske iron-sulfur protein family. In terms of assembly, the 4 large subunits of the cytochrome b6-f complex are cytochrome b6, subunit IV (17 kDa polypeptide, petD), cytochrome f and the Rieske protein, while the 4 small subunits are petG, petL, petM and petN. The complex functions as a dimer. Interacts with PGRL1A. Component of a mitochondrial large protein complex that contains, at least, MIC60, DGS1, TOM40, TOM20 proteins, and petC/RISP. The cofactor is [2Fe-2S] cluster. As to expression, confined to photosynthetic tissues, with highest levels in flowers. In leaves, mostly localized in mesophyll cells. In stems, confined to the peripheral ring of chlorenchyma and adjoining groups of cells associated with the vascular bundles. In siliques, present in green wall of the fruit and in peduncle but not in the translucide white septum of the seeds.

The protein localises to the plastid. It localises to the chloroplast thylakoid membrane. Its subcellular location is the mitochondrion inner membrane. It carries out the reaction 2 oxidized [plastocyanin] + a plastoquinol + 2 H(+)(in) = 2 reduced [plastocyanin] + a plastoquinone + 4 H(+)(out). Its function is as follows. Essential protein for photoautotrophism. Confers resistance to photo-oxidative damages by contributing to the thermal dissipation of light energy and to lumenal acidification (increase of pH gradient). Component of the cytochrome b6-f complex, which mediates electron transfer between photosystem II (PSII) and photosystem I (PSI), cyclic electron flow around PSI, and state transitions. This chain is Cytochrome b6-f complex iron-sulfur subunit, chloroplastic, found in Arabidopsis thaliana (Mouse-ear cress).